The following is a 236-amino-acid chain: Uridylate kinase (236 aa).

10-13 (KLSG) serves as a coordination point for ATP. Gly52 provides a ligand contact to UMP. Positions 53 and 57 each coordinate ATP. UMP-binding positions include Asp72 and 133–140 (TGNPFFTT). ATP contacts are provided by Thr160, Tyr166, and Asp169.

This sequence belongs to the UMP kinase family. Homohexamer.

The protein localises to the cytoplasm. The catalysed reaction is UMP + ATP = UDP + ADP. Its pathway is pyrimidine metabolism; CTP biosynthesis via de novo pathway; UDP from UMP (UMPK route): step 1/1. Its activity is regulated as follows. Inhibited by UTP. Functionally, catalyzes the reversible phosphorylation of UMP to UDP. This is Uridylate kinase from Parabacteroides distasonis (strain ATCC 8503 / DSM 20701 / CIP 104284 / JCM 5825 / NCTC 11152).